Consider the following 788-residue polypeptide: Cadherin-related family member 4 (788 aa).

The first 16 residues, 1–16 (MVLLRLLVFLFAPVVS), serve as a signal peptide directing secretion. The Extracellular segment spans residues 17–686 (DLCSLPCFIN…DTEAFWQPQP (670 aa)). Cadherin domains are found at residues 237-338 (LEQA…PPRC), 339-449 (LPAL…APRT), 444-554 (ACAP…EPPF), and 551-674 (EPPF…TPML). N-linked (GlcNAc...) asparagine glycosylation is present at asparagine 242. Residues 687-707 (WFVVVLTATGALLLLALGWLL) form a helical membrane-spanning segment. Over 708 to 788 (GRLLQGLAQL…NTHTGARRWL (81 aa)) the chain is Cytoplasmic.

The protein localises to the membrane. Its function is as follows. Cadherins are calcium-dependent cell adhesion proteins. They preferentially interact with themselves in a homophilic manner in connecting cells; cadherins may thus contribute to the sorting of heterogeneous cell types. This Homo sapiens (Human) protein is Cadherin-related family member 4 (CDHR4).